The primary structure comprises 170 residues: MDRAQKEKVVEELGQIFESSGVVVVAHYQGLTVANMQDLRGRVRDAGGAVRVAKNKLAKIALDGTDVAGISDLMTGMTVLAYSDDPVAAAKAADEFAKENDNYVILGGAMGENILDADGVKAVAKMPSREELISSIAGCIGAPAANIAGAIGAPASNIASVLSTIEEKAA.

The protein belongs to the universal ribosomal protein uL10 family. Part of the ribosomal stalk of the 50S ribosomal subunit. The N-terminus interacts with L11 and the large rRNA to form the base of the stalk. The C-terminus forms an elongated spine to which L12 dimers bind in a sequential fashion forming a multimeric L10(L12)X complex.

Forms part of the ribosomal stalk, playing a central role in the interaction of the ribosome with GTP-bound translation factors. The chain is Large ribosomal subunit protein uL10 from Jannaschia sp. (strain CCS1).